We begin with the raw amino-acid sequence, 184 residues long: Protein GrpE (184 aa).

A disordered region spans residues 1–35 (MTQENQNPPPEQEDVAADPQVNEAAASEPAAVKTP).

Belongs to the GrpE family. In terms of assembly, homodimer.

It is found in the cytoplasm. Its function is as follows. Participates actively in the response to hyperosmotic and heat shock by preventing the aggregation of stress-denatured proteins, in association with DnaK and GrpE. It is the nucleotide exchange factor for DnaK and may function as a thermosensor. Unfolded proteins bind initially to DnaJ; upon interaction with the DnaJ-bound protein, DnaK hydrolyzes its bound ATP, resulting in the formation of a stable complex. GrpE releases ADP from DnaK; ATP binding to DnaK triggers the release of the substrate protein, thus completing the reaction cycle. Several rounds of ATP-dependent interactions between DnaJ, DnaK and GrpE are required for fully efficient folding. The polypeptide is Protein GrpE (Polynucleobacter asymbioticus (strain DSM 18221 / CIP 109841 / QLW-P1DMWA-1) (Polynucleobacter necessarius subsp. asymbioticus)).